An 824-amino-acid chain; its full sequence is Neuronal PAS domain-containing protein 2 (824 aa).

Residues 1-10 (MDEDEKDRAK) show a composition bias toward basic and acidic residues. Residues 1–21 (MDEDEKDRAKRASRNKSEKKR) are disordered. The sufficient for heterodimer formation with BMAL1, E-box binding and for the effect of NADPH stretch occupies residues 1–61 (MDEDEKDRAK…VIGFLQKHNE (61 aa)). Positions 9-59 (AKRASRNKSEKKRRDQFNVLIKELSSMLPGNTRKMDKTTVLEKVIGFLQKH) constitute a bHLH domain. Residues 82–152 (NEEFTQLMLE…KILSSHMLVT (71 aa)) form the PAS 1 domain. The heme b site is built by His-119 and His-171. One can recognise a PAS 2 domain in the interval 237 to 307 (FLKEMCIVDE…RCHQHLMQFG (71 aa)). Residues 311 to 354 (SCCYRFLTKGQQWIWLQTHYYITYHQWNSKPEFIVCTHSVVSYA) form the PAC domain. 4 disordered regions span residues 367 to 437 (EDPP…MAEA), 556 to 667 (SSTQ…PDFS), 681 to 704 (QPMM…RQVK), and 739 to 824 (PSFP…QPPR). Positions 378-390 (ALKDKGSSLEPRQ) are enriched in basic and acidic residues. Residues 421–431 (TAMSEPTSTPT) show a composition bias toward polar residues. The span at 559 to 576 (QRPEAQQQLQQRSAAVTQ) shows a compositional bias: low complexity. Residues 587 to 610 (GQISSAQVTSQHLLRESSVISTQG) are compositionally biased toward polar residues. A compositionally biased stretch (low complexity) spans 614-636 (MRSSQLMQSSGRSGSSLVSPFSS). 2 stretches are compositionally biased toward polar residues: residues 645–664 (LNLT…QPSP) and 694–704 (SEVSRTGRQVK). Residues 739-760 (PSFPASQPSPLQPAQARQQPPQ) show a composition bias toward low complexity. The segment covering 766–789 (QAPTSLHSEQQDSLLLSTYSQQPG) has biased composition (polar residues). The span at 794-805 (PQPPPAQPQPLR) shows a compositional bias: pro residues. A compositionally biased stretch (low complexity) spans 809–824 (RVSSLSESSGLQQPPR).

Component of the circadian clock oscillator which includes the CRY proteins, CLOCK or NPAS2, BMAL1 or BMAL2, CSNK1D and/or CSNK1E, TIMELESS and the PER proteins. Efficient DNA binding requires dimerization with another bHLH protein. Forms a heterodimer with BMAL1 and this heterodimerization is required for E-box-dependent transactivation. Interacts with NCOA3, KAT2B, CREBBP and EP300. Requires heme as cofactor.

It localises to the nucleus. With respect to regulation, carbon monoxide (CO) and the redox state of the cell can modulate the transcriptional activity of the NPAS2-BMAL1 heterodimer. NADH and NADPH enhance the DNA-binding activity of the heterodimer whereas CO binds the heme group in NPAS2 and inhibits the DNA-binding activity of the heterodimer. Functionally, transcriptional activator which forms a core component of the circadian clock. The circadian clock, an internal time-keeping system, regulates various physiological processes through the generation of approximately 24 hour circadian rhythms in gene expression, which are translated into rhythms in metabolism and behavior. It is derived from the Latin roots 'circa' (about) and 'diem' (day) and acts as an important regulator of a wide array of physiological functions including metabolism, sleep, body temperature, blood pressure, endocrine, immune, cardiovascular, and renal function. Consists of two major components: the central clock, residing in the suprachiasmatic nucleus (SCN) of the brain, and the peripheral clocks that are present in nearly every tissue and organ system. Both the central and peripheral clocks can be reset by environmental cues, also known as Zeitgebers (German for 'timegivers'). The predominant Zeitgeber for the central clock is light, which is sensed by retina and signals directly to the SCN. The central clock entrains the peripheral clocks through neuronal and hormonal signals, body temperature and feeding-related cues, aligning all clocks with the external light/dark cycle. Circadian rhythms allow an organism to achieve temporal homeostasis with its environment at the molecular level by regulating gene expression to create a peak of protein expression once every 24 hours to control when a particular physiological process is most active with respect to the solar day. Transcription and translation of core clock components (CLOCK, NPAS2, BMAL1, BMAL2, PER1, PER2, PER3, CRY1 and CRY2) plays a critical role in rhythm generation, whereas delays imposed by post-translational modifications (PTMs) are important for determining the period (tau) of the rhythms (tau refers to the period of a rhythm and is the length, in time, of one complete cycle). A diurnal rhythm is synchronized with the day/night cycle, while the ultradian and infradian rhythms have a period shorter and longer than 24 hours, respectively. Disruptions in the circadian rhythms contribute to the pathology of cardiovascular diseases, cancer, metabolic syndromes and aging. A transcription/translation feedback loop (TTFL) forms the core of the molecular circadian clock mechanism. Transcription factors, CLOCK or NPAS2 and BMAL1 or BMAL2, form the positive limb of the feedback loop, act in the form of a heterodimer and activate the transcription of core clock genes and clock-controlled genes (involved in key metabolic processes), harboring E-box elements (5'-CACGTG-3') within their promoters. The core clock genes: PER1/2/3 and CRY1/2 which are transcriptional repressors form the negative limb of the feedback loop and interact with the CLOCK|NPAS2-BMAL1|BMAL2 heterodimer inhibiting its activity and thereby negatively regulating their own expression. This heterodimer also activates nuclear receptors NR1D1/2 and RORA/B/G, which form a second feedback loop and which activate and repress BMAL1 transcription, respectively. The NPAS2-BMAL1 heterodimer positively regulates the expression of MAOA, F7 and LDHA and modulates the circadian rhythm of daytime contrast sensitivity by regulating the rhythmic expression of adenylate cyclase type 1 (ADCY1) in the retina. NPAS2 plays an important role in sleep homeostasis and in maintaining circadian behaviors in normal light/dark and feeding conditions and in the effective synchronization of feeding behavior with scheduled food availability. Regulates the gene transcription of key metabolic pathways in the liver and is involved in DNA damage response by regulating several cell cycle and DNA repair genes. Controls the circadian rhythm of NR0B2 expression by binding rhythmically to its promoter. Mediates the diurnal variation in the expression of GABARA1 receptor in the brain and contributes to the regulation of anxiety-like behaviors and GABAergic neurotransmission in the ventral striatum. The protein is Neuronal PAS domain-containing protein 2 (NPAS2) of Homo sapiens (Human).